The chain runs to 319 residues: MFKQSLIWYNRYVQKRKKGLDLTIKDRSWSNVLLGLIFKTVVLCFFGLMVIFPFYLMLVVALTSDEVVLNIREPILKSDGWHFENFRRVLEDGKYLNAIWINSLVTILSIILRLFFTVSMGYAFSLKKWKLKKLFWFIFLAVLILPESALLIGQYRVVVVANWNQPEKPAIILGLTMPFVASVFSGFMFRTAFEAIPPRIKESAFVDGCTGLRYFLKIAFPMVRSTTWTVSILTAFAAWNSYLWPLLLLTNRPDLNINLWVLAQGTDGNAGQSDEQIRVLLNLKMAAAILAILPMFIVYFLFRKRIMKAVGSRANTIKG.

6 consecutive transmembrane segments (helical) span residues 41-61, 98-118, 134-154, 169-189, 229-249, and 282-302; these read VVLC…LVVA, AIWI…FFTV, LFWF…LIGQ, PAII…GFMF, TVSI…LLLL, and NLKM…YFLF. The ABC transmembrane type-1 domain maps to 99–302; sequence IWINSLVTIL…LPMFIVYFLF (204 aa).

It belongs to the binding-protein-dependent transport system permease family. MalFG subfamily.

It is found in the cell membrane. Probably part of a binding-protein-dependent transport system. Probably responsible for the translocation of the substrate across the membrane. The protein is Probable ABC transporter permease protein MG189 homolog of Mycoplasma pneumoniae (strain ATCC 29342 / M129 / Subtype 1) (Mycoplasmoides pneumoniae).